The following is an 807-amino-acid chain: Glycerol-3-phosphate acyltransferase (807 aa).

The short motif at 305-310 (CHRSHM) is the HXXXXD motif element.

This sequence belongs to the GPAT/DAPAT family.

It localises to the cell inner membrane. It catalyses the reaction sn-glycerol 3-phosphate + an acyl-CoA = a 1-acyl-sn-glycero-3-phosphate + CoA. It functions in the pathway phospholipid metabolism; CDP-diacylglycerol biosynthesis; CDP-diacylglycerol from sn-glycerol 3-phosphate: step 1/3. The protein is Glycerol-3-phosphate acyltransferase of Aliivibrio fischeri (strain ATCC 700601 / ES114) (Vibrio fischeri).